A 430-amino-acid chain; its full sequence is Tol-Pal system protein TolB (430 aa).

A signal peptide spans 1–21; it reads MKQALRVAFGFLILWASVLHA.

This sequence belongs to the TolB family. As to quaternary structure, the Tol-Pal system is composed of five core proteins: the inner membrane proteins TolA, TolQ and TolR, the periplasmic protein TolB and the outer membrane protein Pal. They form a network linking the inner and outer membranes and the peptidoglycan layer.

It is found in the periplasm. Part of the Tol-Pal system, which plays a role in outer membrane invagination during cell division and is important for maintaining outer membrane integrity. TolB occupies a key intermediary position in the Tol-Pal system because it communicates directly with both membrane-embedded components, Pal in the outer membrane and TolA in the inner membrane. In Shigella dysenteriae serotype 1 (strain Sd197), this protein is Tol-Pal system protein TolB.